We begin with the raw amino-acid sequence, 66 residues long: MKKEIHPEYVECKVSCACGNTFTTKSNKAELRVDICSNCHPFFTGSEKIVDAAGRVEKFKKKYAMQ.

Zn(2+) contacts are provided by Cys-16, Cys-18, Cys-36, and Cys-39.

Belongs to the bacterial ribosomal protein bL31 family. Type A subfamily. As to quaternary structure, part of the 50S ribosomal subunit. Zn(2+) is required as a cofactor.

In terms of biological role, binds the 23S rRNA. This is Large ribosomal subunit protein bL31 from Campylobacter jejuni subsp. jejuni serotype O:6 (strain 81116 / NCTC 11828).